Reading from the N-terminus, the 192-residue chain is Erythropoietin (192 aa).

The signal sequence occupies residues 1–26; sequence MGVPERPTLLLLLSLLLIPLGLPVLC. Residues Cys-33 and Cys-187 are joined by a disulfide bond. N-linked (GlcNAc...) asparagine glycans are attached at residues Asn-50, Asn-64, and Asn-109.

This sequence belongs to the EPO/TPO family. Produced by kidney or liver of adult mammals and by liver of fetal or neonatal mammals.

It localises to the secreted. In terms of biological role, hormone involved in the regulation of erythrocyte proliferation and differentiation and the maintenance of a physiological level of circulating erythrocyte mass. Binds to EPOR leading to EPOR dimerization and JAK2 activation thereby activating specific downstream effectors, including STAT1 and STAT3. The sequence is that of Erythropoietin (Epo) from Rattus norvegicus (Rat).